The chain runs to 372 residues: Queuine tRNA-ribosyltransferase (372 aa).

The active-site Proton acceptor is the Asp92. Substrate is bound by residues 92 to 96 (DSGGY), Asp146, Gln188, and Gly215. An RNA binding region spans residues 246-252 (GIGSLRE). Residue Asp265 is the Nucleophile of the active site. The segment at 270–274 (TRLGR) is RNA binding; important for wobble base 34 recognition. Zn(2+)-binding residues include Cys303, Cys305, Cys308, and His334.

This sequence belongs to the queuine tRNA-ribosyltransferase family. Homodimer. Within each dimer, one monomer is responsible for RNA recognition and catalysis, while the other monomer binds to the replacement base PreQ1. The cofactor is Zn(2+).

The catalysed reaction is 7-aminomethyl-7-carbaguanine + guanosine(34) in tRNA = 7-aminomethyl-7-carbaguanosine(34) in tRNA + guanine. It participates in tRNA modification; tRNA-queuosine biosynthesis. Catalyzes the base-exchange of a guanine (G) residue with the queuine precursor 7-aminomethyl-7-deazaguanine (PreQ1) at position 34 (anticodon wobble position) in tRNAs with GU(N) anticodons (tRNA-Asp, -Asn, -His and -Tyr). Catalysis occurs through a double-displacement mechanism. The nucleophile active site attacks the C1' of nucleotide 34 to detach the guanine base from the RNA, forming a covalent enzyme-RNA intermediate. The proton acceptor active site deprotonates the incoming PreQ1, allowing a nucleophilic attack on the C1' of the ribose to form the product. After dissociation, two additional enzymatic reactions on the tRNA convert PreQ1 to queuine (Q), resulting in the hypermodified nucleoside queuosine (7-(((4,5-cis-dihydroxy-2-cyclopenten-1-yl)amino)methyl)-7-deazaguanosine). The polypeptide is Queuine tRNA-ribosyltransferase (Prochlorococcus marinus (strain MIT 9211)).